A 318-amino-acid chain; its full sequence is Olfactory receptor 13C7 (318 aa).

Residues 1-27 lie on the Extracellular side of the membrane; the sequence is MVSANQTASVTEFILLGLSAHPKLEKT. The helical transmembrane segment at 28-48 threads the bilayer; the sequence is FFVLILLMYLVILLGNGVLIL. At 49 to 61 the chain is on the cytoplasmic side; sequence MTVSNSHLHMPMY. The chain crosses the membrane as a helical span at residues 62-82; that stretch reads FFLGNLSFLDICYTTSSVPLI. The Extracellular portion of the chain corresponds to 83 to 100; the sequence is LDSFLTPRKTISFSACAV. The chain crosses the membrane as a helical span at residues 101-121; sequence QMFLSFAMGATECVLLSMMAF. Over 122-181 the chain is Cytoplasmic; that stretch reads DRYVAICNPLRYPVVMSKAAYMPKAAGSWVAGSTASMVQTSLAMRLPFCGDNIINHFTCE. Residues 182–202 form a helical membrane-spanning segment; that stretch reads ILAVLKLACADISVNVISMGV. Over 203 to 205 the chain is Extracellular; that stretch reads TNV. Residues 206–226 traverse the membrane as a helical segment; that stretch reads IFLGVPVLFISFSYVFIIATI. Residues 227–238 are Cytoplasmic-facing; it reads LRIPSAEGRKKA. A helical transmembrane segment spans residues 239-259; that stretch reads FSTCSAHLTVVVIFYGTILFM. Topologically, residues 260-278 are extracellular; that stretch reads YGKPKSKDPLGADKQDLAD. The chain crosses the membrane as a helical span at residues 279–289; that stretch reads KLISLFYGVVT. The Cytoplasmic portion of the chain corresponds to 290–318; that stretch reads PMLNPIIYSLRNKDVKAAVRDLIFQKCFA.

This sequence belongs to the G-protein coupled receptor 1 family.

It localises to the cell membrane. Odorant receptor. The chain is Olfactory receptor 13C7 from Homo sapiens (Human).